A 133-amino-acid chain; its full sequence is Small ribosomal subunit protein uS8 (133 aa).

Belongs to the universal ribosomal protein uS8 family. In terms of assembly, part of the 30S ribosomal subunit. Contacts proteins S5 and S12.

Its function is as follows. One of the primary rRNA binding proteins, it binds directly to 16S rRNA central domain where it helps coordinate assembly of the platform of the 30S subunit. In Oenococcus oeni (strain ATCC BAA-331 / PSU-1), this protein is Small ribosomal subunit protein uS8.